Consider the following 83-residue polypeptide: Cell division topological specificity factor (83 aa).

The protein belongs to the MinE family.

In terms of biological role, prevents the cell division inhibition by proteins MinC and MinD at internal division sites while permitting inhibition at polar sites. This ensures cell division at the proper site by restricting the formation of a division septum at the midpoint of the long axis of the cell. The chain is Cell division topological specificity factor from Deinococcus deserti (strain DSM 17065 / CIP 109153 / LMG 22923 / VCD115).